The sequence spans 994 residues: Translation initiation factor IF-2 (994 aa).

Composition is skewed to polar residues over residues 1-10 and 28-40; these read MSDENNNGRN and SVSSGTVKQSFSH. The tract at residues 1-405 is disordered; that stretch reads MSDENNNGRN…REKRKGGAQE (405 aa). Residues 76–91 are compositionally biased toward low complexity; it reads PQKPAGPAQAPRAPQG. Residues 98 to 131 show a composition bias toward basic and acidic residues; sequence AEERAARQRAIELARQQEADRRAREERARAEAEA. The segment covering 132-146 has biased composition (low complexity); that stretch reads ARAAQQKAAQAAAEP. A compositionally biased stretch (pro residues) spans 147 to 157; the sequence is PAAPPPAPAAP. Over residues 158–172 the composition is skewed to low complexity; it reads PAAAAPAAPAAEAAP. A compositionally biased stretch (pro residues) spans 173-188; it reads APKPAPSPRPVPPSAP. Over residues 189 to 204 the composition is skewed to low complexity; it reads APQAARPAAEAPPRQA. Composition is skewed to basic and acidic residues over residues 216–235 and 247–273; these read PDRRDDRPSTTTYRPERPSN and PRRDDDRGPRPPRRDDDRGPRRDDRPQ. Positions 298–310 are enriched in gly residues; it reads RGPGGPRGPGGPR. Basic and acidic residues-rich tracts occupy residues 336–350 and 390–402; these read VDRRPDEDDRRRDPG and RAREREREKRKGG. The 171-residue stretch at 492 to 662 folds into the tr-type G domain; it reads PRPPVVAVMG…LLQAEVLDLK (171 aa). A G1 region spans residues 501–508; that stretch reads GHVDHGKT. GTP is bound at residue 501–508; sequence GHVDHGKT. Residues 526–530 form a G2 region; the sequence is GITQH. A G3 region spans residues 548-551; sequence DTPG. GTP contacts are provided by residues 548–552 and 602–605; these read DTPGH and NKID. The segment at 602-605 is G4; that stretch reads NKID. The G5 stretch occupies residues 638-640; sequence SAT.

This sequence belongs to the TRAFAC class translation factor GTPase superfamily. Classic translation factor GTPase family. IF-2 subfamily.

It localises to the cytoplasm. Its function is as follows. One of the essential components for the initiation of protein synthesis. Protects formylmethionyl-tRNA from spontaneous hydrolysis and promotes its binding to the 30S ribosomal subunits. Also involved in the hydrolysis of GTP during the formation of the 70S ribosomal complex. This chain is Translation initiation factor IF-2, found in Phenylobacterium zucineum (strain HLK1).